Reading from the N-terminus, the 377-residue chain is Porphobilinogen deaminase (377 aa).

Cysteine 269 carries the post-translational modification S-(dipyrrolylmethanemethyl)cysteine.

It belongs to the HMBS family. As to quaternary structure, monomer. Dipyrromethane serves as cofactor.

The enzyme catalyses 4 porphobilinogen + H2O = hydroxymethylbilane + 4 NH4(+). The protein operates within porphyrin-containing compound metabolism; protoporphyrin-IX biosynthesis; coproporphyrinogen-III from 5-aminolevulinate: step 2/4. In terms of biological role, tetrapolymerization of the monopyrrole PBG into the hydroxymethylbilane pre-uroporphyrinogen in several discrete steps. This Micrococcus luteus (strain ATCC 4698 / DSM 20030 / JCM 1464 / CCM 169 / CCUG 5858 / IAM 1056 / NBRC 3333 / NCIMB 9278 / NCTC 2665 / VKM Ac-2230) (Micrococcus lysodeikticus) protein is Porphobilinogen deaminase.